The primary structure comprises 506 residues: Lysine--tRNA ligase (506 aa).

Mg(2+) is bound by residues Glu-415 and Glu-422.

The protein belongs to the class-II aminoacyl-tRNA synthetase family. As to quaternary structure, homodimer. The cofactor is Mg(2+).

It localises to the cytoplasm. The catalysed reaction is tRNA(Lys) + L-lysine + ATP = L-lysyl-tRNA(Lys) + AMP + diphosphate. The sequence is that of Lysine--tRNA ligase (lysS) from Buchnera aphidicola subsp. Acyrthosiphon pisum (strain APS) (Acyrthosiphon pisum symbiotic bacterium).